The chain runs to 145 residues: Secreted RxLR effector protein 100 (145 aa).

Residues 1-19 (MRYLLLTFFTFHCQMVADA) form the signal peptide. The short motif at 27 to 30 (RLLR) is the RxLR element. The tract at residues 38–77 (SGEGKIEEAGMIVTTGAPTPENETMEHNEVPQSTTDTDQK) is disordered. N-linked (GlcNAc...) asparagine glycosylation is present at Asn-59.

This sequence belongs to the RxLR effector family.

The protein localises to the secreted. The protein resides in the host nucleus. Secreted effector that dos not suppress the host cell death induced by cell death-inducing proteins. In Plasmopara viticola (Downy mildew of grapevine), this protein is Secreted RxLR effector protein 100.